The primary structure comprises 250 residues: ADPR responsive transcriptional repressor NtrR (250 aa).

The region spanning 26-157 (LMTVDMAIFS…DHHDLLQQAF (132 aa)) is the Nudix hydrolase domain. Positions 62–85 (GFVDLEQDQNLMACAHRKLLEKTG) match the Nudix box motif. The winged helix-like DNA-binding region stretch occupies residues 164–237 (TRYTALPISL…RFALQDYDFN (74 aa)).

DNA binding is efficiently suppressed in the presence of ADP-ribose (ADPR) or phospho-ADPR. Accumulation of ADPR resulting from NAD degradation may be interpreted by the cell as a signal to activate recycling of nicotinamide. Functionally, involved in the transcriptional regulation of the nondeamidating salvage pathway for production of NAD from nicotinamide. Represses expression of the prs-nadV-nrtR operon by binding to the DNA region located upstream of the operon, thus blocking the nondeamidating pathway. The sequence is that of ADPR responsive transcriptional repressor NtrR from Acinetobacter baylyi (strain ATCC 33305 / BD413 / ADP1).